A 198-amino-acid polypeptide reads, in one-letter code: Ribonuclease HII (198 aa).

One can recognise an RNase H type-2 domain in the interval leucine 3 to lysine 198. A divalent metal cation is bound by residues aspartate 9, glutamate 10, and aspartate 104.

The protein belongs to the RNase HII family. Mn(2+) serves as cofactor. Requires Mg(2+) as cofactor.

It localises to the cytoplasm. The enzyme catalyses Endonucleolytic cleavage to 5'-phosphomonoester.. Its function is as follows. Endonuclease that specifically degrades the RNA of RNA-DNA hybrids. The protein is Ribonuclease HII of Pyrobaculum arsenaticum (strain DSM 13514 / JCM 11321 / PZ6).